A 312-amino-acid polypeptide reads, in one-letter code: Lipoyl synthase (312 aa).

[4Fe-4S] cluster is bound by residues cysteine 51, cysteine 56, cysteine 62, cysteine 77, cysteine 81, cysteine 84, and serine 290. In terms of domain architecture, Radical SAM core spans 63–280 (WSRKTATYLA…RTIGTSLGLF (218 aa)).

The protein belongs to the radical SAM superfamily. Lipoyl synthase family. The cofactor is [4Fe-4S] cluster.

The protein resides in the cytoplasm. It catalyses the reaction [[Fe-S] cluster scaffold protein carrying a second [4Fe-4S](2+) cluster] + N(6)-octanoyl-L-lysyl-[protein] + 2 oxidized [2Fe-2S]-[ferredoxin] + 2 S-adenosyl-L-methionine + 4 H(+) = [[Fe-S] cluster scaffold protein] + N(6)-[(R)-dihydrolipoyl]-L-lysyl-[protein] + 4 Fe(3+) + 2 hydrogen sulfide + 2 5'-deoxyadenosine + 2 L-methionine + 2 reduced [2Fe-2S]-[ferredoxin]. It functions in the pathway protein modification; protein lipoylation via endogenous pathway; protein N(6)-(lipoyl)lysine from octanoyl-[acyl-carrier-protein]: step 2/2. Its function is as follows. Catalyzes the radical-mediated insertion of two sulfur atoms into the C-6 and C-8 positions of the octanoyl moiety bound to the lipoyl domains of lipoate-dependent enzymes, thereby converting the octanoylated domains into lipoylated derivatives. The sequence is that of Lipoyl synthase from Chlamydia caviae (strain ATCC VR-813 / DSM 19441 / 03DC25 / GPIC) (Chlamydophila caviae).